We begin with the raw amino-acid sequence, 331 residues long: Ketol-acid reductoisomerase (NADP(+)) (331 aa).

Residues 2–182 enclose the KARI N-terminal Rossmann domain; the sequence is ARLYYDADAN…GGTRAGILET (181 aa). NADP(+) is bound by residues 25 to 28, Ser-51, Ser-53, and 83 to 86; these read YGSQ and DEVQ. The active site involves His-108. Residue Gly-134 coordinates NADP(+). The 146-residue stretch at 183-328 folds into the KARI C-terminal knotted domain; sequence TFREETETDL…KDLRAMFSWL (146 aa). 4 residues coordinate Mg(2+): Asp-191, Glu-195, Glu-227, and Glu-231. Ser-252 lines the substrate pocket.

Belongs to the ketol-acid reductoisomerase family. It depends on Mg(2+) as a cofactor.

The catalysed reaction is (2R)-2,3-dihydroxy-3-methylbutanoate + NADP(+) = (2S)-2-acetolactate + NADPH + H(+). It carries out the reaction (2R,3R)-2,3-dihydroxy-3-methylpentanoate + NADP(+) = (S)-2-ethyl-2-hydroxy-3-oxobutanoate + NADPH + H(+). It participates in amino-acid biosynthesis; L-isoleucine biosynthesis; L-isoleucine from 2-oxobutanoate: step 2/4. The protein operates within amino-acid biosynthesis; L-valine biosynthesis; L-valine from pyruvate: step 2/4. Its function is as follows. Involved in the biosynthesis of branched-chain amino acids (BCAA). Catalyzes an alkyl-migration followed by a ketol-acid reduction of (S)-2-acetolactate (S2AL) to yield (R)-2,3-dihydroxy-isovalerate. In the isomerase reaction, S2AL is rearranged via a Mg-dependent methyl migration to produce 3-hydroxy-3-methyl-2-ketobutyrate (HMKB). In the reductase reaction, this 2-ketoacid undergoes a metal-dependent reduction by NADPH to yield (R)-2,3-dihydroxy-isovalerate. The sequence is that of Ketol-acid reductoisomerase (NADP(+)) from Cyanothece sp. (strain PCC 7425 / ATCC 29141).